Reading from the N-terminus, the 1160-residue chain is MSASNEKWIDGLQFSSLFWPPPQDSQQKQAQILAYVEYFGQFTADSEQFPEDIAQLIQSCYPSKEKRLVDEVLATFVLHHPEHGHAVVHPILSRIIDGTLSYDRNGFPFMSFISLFSHTSEKEYSEQWALACGEILRVLTHYNRPIFKVDHQHSEAECSSTSDQASSCESMEKRANGSPRNEPDRKPLRPLSPWITDILLAAPLGIRSDYFRWCGGVMGKYAAGGELKPPTTAYSRGSGKHPQLMPSTPRWAVANGAGVILSVCDEEVARYETANLTAAAVPALLLPPPTTPLDEHLVAGLPPLEPYARLFHRYYAIATPSATQRLLFGLLEAPPSWAPDALDAAVQLVELLRAAEDYDSGMRLPKNWMHLHFLRAIGTAMSMRAGIAADTSAALLFRILSQPTLLFPPLRHAEGVELHHEPLGGYVSSYKRQLEVPASEATIDATAQGIASMLCAHGPDVEWRICTIWEAAYGLLPLSSSAVDLPEIVVAAPLQPPTLSWSLYLPLLKVFEYLPRGSPSEACLMRIFVATVEAILRRTFPSETSEQSRKPRSQSKNLAVAELRTMIHSLFVESCASMDLASRLLFVVLTVCVSHQALPGGSKRPTGSDNHSSEEVTNDSRLTNGRNRCKKRQGPVATFDSYVLAAVCALSCELQLFPFISKNGNHSNLKDSIKIVIPGKTTGISNELHNSISSAILHTRRILGILEALFSLKPSSVGTSWSYSSNEIVAAAMVAAHVSELFRRSRPCLNALSALKQCKWDAEISTRASSLYHLIDLHGKTVTSIVNKAEPLEAHLTLTPVKKDEPPIEEKNINSSDGGALEKKDASRSHRKNGFARPLLKCAEDVILNGDVASTSGKAIASLQVEASDLANFLTMDRNGGYRGSQTLLRSVLSEKQELCFSVVSLLWQKLIASPEMQMSAESTSAHQGWRKVVDALCDIVSASPTKASAAIVLQAEKDLQPWIARDDEQGQKMWRVNQRIVKLIAELMRNHDSPEALVILASASDLLLRATDGMLVDGEACTLPQLELLEVTARAVHLIVEWGDSGVSVADGLSNLLKCRLSTTIRCLSHPSAHVRALSMSVLRDILNSGQINSSKLIQGEHRNGIQSPTYQCLAASIINWQADVERCIEWEAHSRRATGLTLAFLTAAAKELGCPLTC.

A compositionally biased stretch (polar residues) spans cysteine 158 to glutamate 169. Disordered regions lie at residues cysteine 158–leucine 188, glycine 600–cysteine 629, and proline 800–histidine 830. The span at serine 170–proline 187 shows a compositional bias: basic and acidic residues. Positions valine 801–asparagine 812 are enriched in basic and acidic residues.

It belongs to the GIGANTEA family.

It is found in the nucleus. Functionally, involved in regulation of circadian rhythm, and in the control of the photoperiodic flowering. Acts as a suppressor of flowering under short-day (SD) and long-day (LD) conditions. Activates Hd1/CONSTANS gene. This is Protein GIGANTEA (GI) from Oryza sativa subsp. japonica (Rice).